Consider the following 988-residue polypeptide: Kinesin-like protein CIN8 (988 aa).

Positions 33–470 constitute a Kinesin motor domain; that stretch reads NILVAVRCRG…LEYASKAKNI (438 aa). 125–132 contacts ATP; it reads GMTSTGKT. The segment at 206–301 is disordered; it reads FDSNVNGTSA…NSNNTNQQQS (96 aa). A compositionally biased stretch (low complexity) spans 208 to 237; that stretch reads SNVNGTSASGSSSRSSSRNNSPRSAPDNSR. The segment covering 248 to 280 has biased composition (polar residues); that stretch reads HNTTGNSKISNNNHNKFSRFKQTSQESTRAHAS. A compositionally biased stretch (low complexity) spans 281–301; the sequence is NNHQNVHIPNNNSNNTNQQQS. Coiled-coil stretches lie at residues 514-619 and 707-769; these read EHYK…ELQQ and KLAE…MQNF. Basic and acidic residues predominate over residues 965–974; that stretch reads ALQEKRKPED. Residues 965–988 form a disordered region; it reads ALQEKRKPEDEVLLQAKLQRRNPD.

It belongs to the TRAFAC class myosin-kinesin ATPase superfamily. Kinesin family. BimC subfamily.

It is found in the cytoplasm. It localises to the cytoskeleton. Its subcellular location is the spindle. Elongates the mitotic spindle by interacting with spindle microtubules to generate an outward force pushing spindle poles apart. Following spindle assembly, CIN8 and KIP1 apparently act to oppose a force, possibly generated by KAR3, that draws separated poles back together. The chain is Kinesin-like protein CIN8 (CIN8) from Candida glabrata (strain ATCC 2001 / BCRC 20586 / JCM 3761 / NBRC 0622 / NRRL Y-65 / CBS 138) (Yeast).